Here is a 359-residue protein sequence, read N- to C-terminus: L-seryl-tRNA(Sec) kinase (359 aa).

Glycine 25 to serine 32 provides a ligand contact to ATP.

It belongs to the L-seryl-tRNA(Sec) kinase family. It depends on Mg(2+) as a cofactor.

It carries out the reaction L-seryl-tRNA(Sec) + ATP = O-phospho-L-seryl-tRNA(Sec) + ADP. It participates in aminoacyl-tRNA biosynthesis; selenocysteinyl-tRNA(Sec) biosynthesis; selenocysteinyl-tRNA(Sec) from L-seryl-tRNA(Sec) (archaeal/eukaryal route): step 1/2. Specifically phosphorylates seryl-tRNA(Sec) to O-phosphoseryl-tRNA(Sec), an activated intermediate for selenocysteine biosynthesis. No activity with other tRNAs has been detected. This is L-seryl-tRNA(Sec) kinase (Pstk) from Mus musculus (Mouse).